Reading from the N-terminus, the 239-residue chain is Ribonuclease PH (239 aa).

Residues Arg87 and 125–127 (GTR) each bind phosphate.

The protein belongs to the RNase PH family. As to quaternary structure, homohexameric ring arranged as a trimer of dimers.

The enzyme catalyses tRNA(n+1) + phosphate = tRNA(n) + a ribonucleoside 5'-diphosphate. Functionally, phosphorolytic 3'-5' exoribonuclease that plays an important role in tRNA 3'-end maturation. Removes nucleotide residues following the 3'-CCA terminus of tRNAs; can also add nucleotides to the ends of RNA molecules by using nucleoside diphosphates as substrates, but this may not be physiologically important. Probably plays a role in initiation of 16S rRNA degradation (leading to ribosome degradation) during starvation. This Cellvibrio japonicus (strain Ueda107) (Pseudomonas fluorescens subsp. cellulosa) protein is Ribonuclease PH.